A 416-amino-acid chain; its full sequence is Enolase (416 aa).

Gln160 is a (2R)-2-phosphoglycerate binding site. Catalysis depends on Glu204, which acts as the Proton donor. Positions 239, 282, and 308 each coordinate Mg(2+). The (2R)-2-phosphoglycerate site is built by Lys333, Arg362, Ser363, and Lys384. The Proton acceptor role is filled by Lys333.

The protein belongs to the enolase family. The cofactor is Mg(2+).

It localises to the cytoplasm. The protein localises to the secreted. It is found in the cell surface. The catalysed reaction is (2R)-2-phosphoglycerate = phosphoenolpyruvate + H2O. It participates in carbohydrate degradation; glycolysis; pyruvate from D-glyceraldehyde 3-phosphate: step 4/5. Functionally, catalyzes the reversible conversion of 2-phosphoglycerate (2-PG) into phosphoenolpyruvate (PEP). It is essential for the degradation of carbohydrates via glycolysis. This Metallosphaera sedula (strain ATCC 51363 / DSM 5348 / JCM 9185 / NBRC 15509 / TH2) protein is Enolase.